Reading from the N-terminus, the 228-residue chain is Uracil-DNA glycosylase (228 aa).

The active-site Proton acceptor is Asp-64.

This sequence belongs to the uracil-DNA glycosylase (UDG) superfamily. UNG family.

It is found in the cytoplasm. It carries out the reaction Hydrolyzes single-stranded DNA or mismatched double-stranded DNA and polynucleotides, releasing free uracil.. Excises uracil residues from the DNA which can arise as a result of misincorporation of dUMP residues by DNA polymerase or due to deamination of cytosine. The protein is Uracil-DNA glycosylase of Pectobacterium atrosepticum (strain SCRI 1043 / ATCC BAA-672) (Erwinia carotovora subsp. atroseptica).